Consider the following 121-residue polypeptide: Fluoride-specific ion channel FluC 1 (121 aa).

4 helical membrane-spanning segments follow: residues 3-23 (YLYI…LSML), 29-49 (IPLG…SIGA), 67-87 (TGLL…VTLF), and 92-112 (FILF…SCYL). Na(+) contacts are provided by glycine 71 and threonine 74.

It belongs to the fluoride channel Fluc/FEX (TC 1.A.43) family.

It localises to the cell membrane. The catalysed reaction is fluoride(in) = fluoride(out). With respect to regulation, na(+) is not transported, but it plays an essential structural role and its presence is essential for fluoride channel function. Its function is as follows. Fluoride-specific ion channel. Important for reducing fluoride concentration in the cell, thus reducing its toxicity. This chain is Fluoride-specific ion channel FluC 1, found in Staphylococcus epidermidis (strain ATCC 35984 / DSM 28319 / BCRC 17069 / CCUG 31568 / BM 3577 / RP62A).